Here is a 54-residue protein sequence, read N- to C-terminus: Large ribosomal subunit protein bL33B (54 aa).

It belongs to the bacterial ribosomal protein bL33 family.

The sequence is that of Large ribosomal subunit protein bL33B (rpmG2) from Streptomyces coelicolor (strain ATCC BAA-471 / A3(2) / M145).